Reading from the N-terminus, the 109-residue chain is Transcription initiation factor IIA subunit 2 (109 aa).

This sequence belongs to the TFIIA subunit 2 family. As to quaternary structure, TFIIA is a heterodimer of the large unprocessed subunit 1 and a small subunit gamma. It was originally believed to be a heterotrimer of an alpha (p35), a beta (p19) and a gamma subunit (p12). Interacts with NCOA6 general coactivator. TFIIA forms a complex with TBP. Interacts with HSF1 (via transactivation domain). Part of TBP-based Pol II pre-initiation complex (PIC), in which Pol II core assembles with general transcription factors and other specific initiation factors including GTF2E1, GTF2E2, GTF2F1, GTF2F2, TCEA1, ERCC2, ERCC3, GTF2H2, GTF2H3, GTF2H4, GTF2H5, GTF2A1, GTF2A2, GTF2B and TBP; this large multi-subunit PIC complex mediates DNA unwinding and targets Pol II core to the transcription start site where the first phosphodiester bond forms. In terms of assembly, (Microbial infection) Interacts with SV40 Large T antigen.

It is found in the nucleus. Its function is as follows. TFIIA is a component of the transcription machinery of RNA polymerase II and plays an important role in transcriptional activation. TFIIA in a complex with TBP mediates transcriptional activity. In Homo sapiens (Human), this protein is Transcription initiation factor IIA subunit 2 (GTF2A2).